We begin with the raw amino-acid sequence, 318 residues long: MNLWHATSPTIWQGRNDLAEADNALRLFQTVKLSPYFTPEEFSHYVALLGFECDEGVKRNQGRPGANQGPDYLRQSLANMASHKGHDKLVDLGSIRANPNQLSEAQQALSDAVTQCQCQNVRTLVLGGGHETAFAHGVGIYDAFPHQRVGIINFDAHLDLRRSPQPTSGTPFRQLAEYCQQHQRLFHYTCIGASLASNTQALVDEANRLNATIIWDNQCRETMLDKVQQQIQDILQQVDLIYMTIDLDVLPAYQMPAVSAPAALGLPLERLLQLIQPICQSGKLQAADLVELNPLFDIQGIGGRAAARLAWQLAHWWY.

His-130, Asp-155, His-157, Asp-159, Asp-246, and Asp-248 together coordinate Mn(2+).

Belongs to the arginase family. Requires Mn(2+) as cofactor.

It carries out the reaction N-formimidoyl-L-glutamate + H2O = formamide + L-glutamate. Its pathway is amino-acid degradation; L-histidine degradation into L-glutamate; L-glutamate from N-formimidoyl-L-glutamate (hydrolase route): step 1/1. Its function is as follows. Catalyzes the conversion of N-formimidoyl-L-glutamate to L-glutamate and formamide. The protein is Formimidoylglutamase of Photorhabdus laumondii subsp. laumondii (strain DSM 15139 / CIP 105565 / TT01) (Photorhabdus luminescens subsp. laumondii).